Reading from the N-terminus, the 328-residue chain is Eukaryotic translation initiation factor 3 subunit I (328 aa).

WD repeat units follow at residues 8-47, 50-91, 148-187, 190-229, and 287-328; these read GHER…RLGT, GHQG…GTIP, SIQT…ELNS, DHTG…CLKT, and GHFG…FVFE.

This sequence belongs to the eIF-3 subunit I family. Component of the eukaryotic translation initiation factor 3 (eIF-3) complex.

Its subcellular location is the cytoplasm. In terms of biological role, component of the eukaryotic translation initiation factor 3 (eIF-3) complex, which is involved in protein synthesis of a specialized repertoire of mRNAs and, together with other initiation factors, stimulates binding of mRNA and methionyl-tRNAi to the 40S ribosome. The eIF-3 complex specifically targets and initiates translation of a subset of mRNAs involved in cell proliferation. This is Eukaryotic translation initiation factor 3 subunit I from Culex quinquefasciatus (Southern house mosquito).